A 407-amino-acid polypeptide reads, in one-letter code: O-methyltransferase verK (407 aa).

S-adenosyl-L-methionine is bound by residues E263 and 295–297 (GDF). The active-site Proton acceptor is H314.

Belongs to the class I-like SAM-binding methyltransferase superfamily. Cation-independent O-methyltransferase family.

The protein operates within mycotoxin biosynthesis. Functionally, O-methyltransferase; part of the gene cluster that mediates the biosynthesis of 11'-deoxyverticillin A, one of the dimeric epipolythiodioxopiperazines (ETPs) from the verticillin family that act as mycotoxins. 11'-deoxyverticillin A is required for normal conidiation. The nonribosomal peptide synthetase verP is speculated to be responsible for condensation of amino acids to form the carbon skeleton of verticillin, whereas the cluster-specific tailoring enzymes are involved in further modifications leading to the production of 11'-deoxyverticillin A. The chain is O-methyltransferase verK from Clonostachys rogersoniana.